The following is a 901-amino-acid chain: Protein translocase subunit SecA (901 aa).

ATP is bound by residues Q87, G105 to T109, and D512. Residues C885, C887, C896, and H897 each contribute to the Zn(2+) site.

This sequence belongs to the SecA family. As to quaternary structure, monomer and homodimer. Part of the essential Sec protein translocation apparatus which comprises SecA, SecYEG and auxiliary proteins SecDF-YajC and YidC. It depends on Zn(2+) as a cofactor.

The protein resides in the cell inner membrane. The protein localises to the cytoplasm. It catalyses the reaction ATP + H2O + cellular proteinSide 1 = ADP + phosphate + cellular proteinSide 2.. In terms of biological role, part of the Sec protein translocase complex. Interacts with the SecYEG preprotein conducting channel. Has a central role in coupling the hydrolysis of ATP to the transfer of proteins into and across the cell membrane, serving both as a receptor for the preprotein-SecB complex and as an ATP-driven molecular motor driving the stepwise translocation of polypeptide chains across the membrane. This chain is Protein translocase subunit SecA, found in Salmonella enteritidis PT4 (strain P125109).